The following is a 354-amino-acid chain: Methylthioribose-1-phosphate isomerase (354 aa).

Substrate contacts are provided by residues 48–50 (RGA), arginine 95, and glutamine 202. The active-site Proton donor is aspartate 243. 253–254 (NK) contributes to the substrate binding site.

This sequence belongs to the eIF-2B alpha/beta/delta subunits family. MtnA subfamily.

The enzyme catalyses 5-(methylsulfanyl)-alpha-D-ribose 1-phosphate = 5-(methylsulfanyl)-D-ribulose 1-phosphate. Its pathway is amino-acid biosynthesis; L-methionine biosynthesis via salvage pathway; L-methionine from S-methyl-5-thio-alpha-D-ribose 1-phosphate: step 1/6. Catalyzes the interconversion of methylthioribose-1-phosphate (MTR-1-P) into methylthioribulose-1-phosphate (MTRu-1-P). This Roseiflexus castenholzii (strain DSM 13941 / HLO8) protein is Methylthioribose-1-phosphate isomerase.